Here is a 651-residue protein sequence, read N- to C-terminus: Kinesin-like protein KIF22-A (651 aa).

The region spanning 31 to 359 (RVRVAVRLRP…LNFAAKSKQI (329 aa)) is the Kinesin motor domain. 116–123 (GPTGAGKT) contacts ATP. Residues 366–413 (QETTQTVVQPAMKRPREETGHIAGSQKRKKSKNDSTESSPNSSMDTAG) are disordered. Over residues 401–410 (TESSPNSSMD) the composition is skewed to polar residues. A coiled-coil region spans residues 452–498 (KRERMALLKKWEESQMEIERLKEKQKELEQKAMEAEARLEKSNNSDL). Residues 561-564 (GLEN) carry the Important for regulated proteolytic degradation motif.

The protein belongs to the TRAFAC class myosin-kinesin ATPase superfamily. Kinesin family. Ubiquitinated, leading to its subsequent proteasomal degradation.

It is found in the nucleus. Its subcellular location is the cytoplasm. The protein resides in the cytoskeleton. Functionally, kinesin family member that is involved in spindle formation and the movements of chromosomes during mitosis and meiosis. Binds to microtubules and to DNA. The sequence is that of Kinesin-like protein KIF22-A (kif22-a) from Xenopus laevis (African clawed frog).